The chain runs to 447 residues: Cytochrome P450 BJ-4 homolog (447 aa).

Residue C392 participates in heme binding.

The protein belongs to the cytochrome P450 family. Heme serves as cofactor.

In terms of biological role, cytochromes P450 are a group of heme-thiolate monooxygenases. They oxidize a variety of structurally unrelated compounds, including steroids, fatty acids, and xenobiotics. The sequence is that of Cytochrome P450 BJ-4 homolog (cyp117A2) from Sinorhizobium fredii (strain NBRC 101917 / NGR234).